Consider the following 346-residue polypeptide: Uroporphyrinogen decarboxylase (346 aa).

Substrate is bound by residues 23-27, aspartate 72, tyrosine 155, serine 209, and histidine 322; that span reads RQAGR.

It belongs to the uroporphyrinogen decarboxylase family. Homodimer.

The protein resides in the cytoplasm. It carries out the reaction uroporphyrinogen III + 4 H(+) = coproporphyrinogen III + 4 CO2. It functions in the pathway porphyrin-containing compound metabolism; protoporphyrin-IX biosynthesis; coproporphyrinogen-III from 5-aminolevulinate: step 4/4. In terms of biological role, catalyzes the decarboxylation of four acetate groups of uroporphyrinogen-III to yield coproporphyrinogen-III. In Anaeromyxobacter dehalogenans (strain 2CP-C), this protein is Uroporphyrinogen decarboxylase.